The following is an 802-amino-acid chain: MSLQYHVLNSIPSTTFLSSTKTTISSSFLTISGSPLNVARDKSRSGSIHCSKLRTQEYINSQEVQHDLPLIHEWQQLQGEDAPQISVGSNSNAFKEAVKSVKTILRNLTDGEITISAYDTAWVALIDAGDKTPAFPSAVKWIAENQLSDGSWGDAYLFSYHDRLINTLACVVALRSWNLFPHQCNKGITFFRENIGKLEDENDEHMPIGFEVAFPSLLEIARGINIDVPYDSPVLKDIYAKKELKLTRIPKEIMHKIPTTLLHSLEGMRDLDWEKLLKLQSQDGSFLFSPSSTAFAFMQTRDSNCLEYLRNAVKRFNGGVPNVFPVDLFEHIWIVDRLQRLGISRYFEEEIKECLDYVHRYWTDNGICWARCSHVQDIDDTAMAFRLLRQHGYQVSADVFKNFEKEGEFFCFVGQSNQAVTGMFNLYRASQLAFPREEILKNAKEFSYNYLLEKREREELIDKWIIMKDLPGEIGFALEIPWYASLPRVETRFYIDQYGGENDVWIGKTLYRMPYVNNNGYLELAKQDYNNCQAQHQLEWDIFQKWYEENRLSEWGVRRSELLECYYLAAATIFESERSHERMVWAKSSVLVKAISSSFGESSDSRRSFSDQFHEYIANARRSDHHFNDRNMRLDRPGSVQASRLAGVLIGTLNQMSFDLFMSHGRDVNNLLYLSWGDWMEKWKLYGDEGEGELMVKMIILMKNNDLTNFFTHTHFVRLAEIINRICLPRQYLKARRNDEKEKTIKSMEKEMGKMVELALSESDTFRDVSITFLDVAKAFYYFALCGDHLQTHISKVLFQKV.

The N-terminal 60 residues, methionine 1–asparagine 60, are a transit peptide targeting the chloroplast. A substrate-binding site is contributed by lysine 245. Mg(2+) contacts are provided by aspartate 377 and aspartate 379. The DXDD motif signature appears at aspartate 377–aspartate 380. Residue lysine 463 coordinates substrate.

Belongs to the terpene synthase family. Tpsc subfamily. Mg(2+) is required as a cofactor. Post-translationally, the N-terminus is blocked. As to expression, expressed in roots, leaves, flowers and also in siliques.

The protein resides in the plastid. Its subcellular location is the chloroplast. The catalysed reaction is (2E,6E,10E)-geranylgeranyl diphosphate = ent-copalyl diphosphate. It participates in plant hormone biosynthesis; gibberellin biosynthesis. With respect to regulation, inhibited by high concentrations of magnesium. In terms of biological role, catalyzes the conversion of geranylgeranyl diphosphate to the gibberellin precursor ent-copalyl diphosphate. This is Ent-copalyl diphosphate synthase, chloroplastic (GA1) from Arabidopsis thaliana (Mouse-ear cress).